A 205-amino-acid polypeptide reads, in one-letter code: Small ribosomal subunit protein uS2 (205 aa).

It belongs to the universal ribosomal protein uS2 family.

The sequence is that of Small ribosomal subunit protein uS2 from Methanoculleus marisnigri (strain ATCC 35101 / DSM 1498 / JR1).